The primary structure comprises 201 residues: Peptidyl-tRNA hydrolase (201 aa).

Position 14 (Tyr-14) interacts with tRNA. His-19 acts as the Proton acceptor in catalysis. TRNA contacts are provided by Tyr-64, Asn-66, and Asn-112.

The protein belongs to the PTH family. Monomer.

It is found in the cytoplasm. The catalysed reaction is an N-acyl-L-alpha-aminoacyl-tRNA + H2O = an N-acyl-L-amino acid + a tRNA + H(+). Hydrolyzes ribosome-free peptidyl-tRNAs (with 1 or more amino acids incorporated), which drop off the ribosome during protein synthesis, or as a result of ribosome stalling. Functionally, catalyzes the release of premature peptidyl moieties from peptidyl-tRNA molecules trapped in stalled 50S ribosomal subunits, and thus maintains levels of free tRNAs and 50S ribosomes. This chain is Peptidyl-tRNA hydrolase, found in Bradyrhizobium sp. (strain ORS 278).